We begin with the raw amino-acid sequence, 266 residues long: Type II iodothyronine deiodinase (266 aa).

Topologically, residues 1–9 (MGLLSVDLL) are lumenal. A helical; Signal-anchor for type III membrane protein membrane pass occupies residues 10–34 (ITLQILPVFFSNCLFLALYDSVILL). Over 35 to 266 (KHVALLLSRS…KNFSKRUILD (232 aa)) the chain is Cytoplasmic. Sec-130 is a catalytic residue. Residues Sec-130 and Sec-263 are each a non-standard amino acid (selenocysteine).

It belongs to the iodothyronine deiodinase family. As to quaternary structure, predominantly monomer. Can form homodimers but homodimerization is not essential for enzyme activity. Interacts with USP20 and USP33. Interacts with MARCHF6. Ubiquitinated by MARCHF6, leading to its degradation by the proteasome. Deubiquitinated by USP20 and USP33. Expressed in cerebral cortex, cerebellum, pituitary gland, mostly in anterior pituitary gland, and pineal gland, as well as in brown adipose tissue (BAT).

The protein resides in the endoplasmic reticulum membrane. It catalyses the reaction 3,3',5-triiodo-L-thyronine + iodide + A + H(+) = L-thyroxine + AH2. It carries out the reaction 3,3'-diiodo-L-thyronine + iodide + A + H(+) = 3,3',5'-triiodo-L-thyronine + AH2. The enzyme catalyses 3'-iodo-L-thyronine + iodide + A + H(+) = 3',5'-diiodo-L-thyronine + AH2. The catalysed reaction is 3,3'-diiodothyronamine + iodide + A + H(+) = 3,3',5'-triiodothyronamine + AH2. It catalyses the reaction 3'-iodothyronamine + iodide + A + H(+) = 3',5'-diiodothyronamine + AH2. In terms of biological role, plays a crucial role in the metabolism of thyroid hormones (TH) and has specific roles in TH activation and inactivation by deiodination. Catalyzes the deiodination of L-thyroxine (T4) to 3,5,3'-triiodothyronine (T3) and 3',5'-diiodothyronine (3',5'-T2) to 3'-monoiodothyronine (3'-T1) via outer-ring deiodination (ORD). Catalyzes the deiodination of 3,3',5'-triiodothyronine (rT3) to 3,3'-diiodothyronine (3,3'-T2) via ORD. Catalyzes the phenolic ring deiodinations of 3,3',5'-triiodothyronamine and 3',5'- diiodothyronamine. This Rattus norvegicus (Rat) protein is Type II iodothyronine deiodinase (Dio2).